The sequence spans 344 residues: Galactoside alpha-(1,2)-fucosyltransferase 2 (344 aa).

Residues 1–7 (MFSTQTF) are Cytoplasmic-facing. The helical; Signal-anchor for type II membrane protein transmembrane segment at 8–28 (FFFPTAPFILFVFTASTIFHL) threads the bilayer. Residues 29–344 (HQRLEKMQPT…PADLSPLLKH (316 aa)) are Lumenal-facing. Residues asparagine 189, asparagine 255, asparagine 283, and asparagine 309 are each glycosylated (N-linked (GlcNAc...) asparagine).

As to expression, expressed in brain, heart, lung, intestin and kidney.

It localises to the golgi apparatus. The protein resides in the golgi stack membrane. The catalysed reaction is a beta-D-galactosyl-(1-&gt;3)-N-acetyl-beta-D-glucosaminyl derivative + GDP-beta-L-fucose = an alpha-L-Fuc-(1-&gt;2)-beta-D-Gal-(1-&gt;3)-beta-D-GlcNAc derivative + GDP + H(+). It catalyses the reaction a beta-D-galactosyl-(1-&gt;4)-N-acetyl-beta-D-glucosaminyl derivative + GDP-beta-L-fucose = an alpha-L-Fuc-(1-&gt;2)-beta-D-Gal-(1-&gt;4)-beta-D-GlcNAc derivative + GDP + H(+). The enzyme catalyses a ganglioside GM1 + GDP-beta-L-fucose = a ganglioside Fuc-GM1 + GDP + H(+). It carries out the reaction a neolactoside nLc4Cer + GDP-beta-L-fucose = a neolactoside IV(2)-alpha-Fuc-nLc4Cer + GDP + H(+). The catalysed reaction is a neolactoside nLc4Cer(d18:1(4E)) + GDP-beta-L-fucose = a neolactoside IV(2)-alpha-Fuc-nLc4Cer(d18:1(4E)) + GDP + H(+). It catalyses the reaction a ganglioside GA1 + GDP-beta-L-fucose = a ganglioside Fuc-GA1 + GDP + H(+). The enzyme catalyses Lc4Cer + GDP-beta-L-fucose = alpha-L-fucosyl-(1-&gt;2)-beta-D-galactosyl-(1-&gt;3)-N-acetyl-beta-D-glucosaminyl-(1-&gt;3)-beta-D-galactosyl-(1-&gt;4)-beta-D-glucosyl-(1&lt;-&gt;1')-ceramide + GDP + H(+). It carries out the reaction a beta-D-Gal-(1-&gt;3)-beta-D-GlcNAc-(1-&gt;3)-beta-D-Gal-(1-&gt;4)-beta-D-Glc-(1&lt;-&gt;1')-Cer(d18:1(4E)) + GDP-beta-L-fucose = alpha-L-fucosyl-(1-&gt;2)- beta-D-galactosyl-(1-&gt;3)-N-acetyl-beta-D-glucosaminyl-(1-&gt;3)-beta-D-galactosyl-(1-&gt;4)-beta-D-glucosyl-(1&lt;-&gt;1')-N-acylsphing-4-enine + GDP + H(+). The catalysed reaction is a ganglioside GD1b + GDP-beta-L-fucose = a ganglioside Fuc-GD1b + GDP + H(+). It catalyses the reaction a ganglioside GM1 (d18:1(4E)) + GDP-beta-L-fucose = a ganglioside Fuc-GM1 (d18:1(4E)) + GDP + H(+). The enzyme catalyses a globoside GalGb4Cer (d18:1(4E)) + GDP-beta-L-fucose = a globoside Globo-H (d18:1(4E)) + GDP + H(+). It carries out the reaction a lactoside III(4)-a-Fuc-Lc4Cer + GDP-beta-L-fucose = a lactoside IV(2),III(4)-a-[Fuc]2-Lc4Cer + GDP + H(+). The catalysed reaction is beta-D-galactosyl-(1-&gt;3)-N-acetyl-D-galactosamine + GDP-beta-L-fucose = alpha-L-fucosyl-(1-&gt;2)-beta-D-galactosyl-(1-&gt;3)-N-acetyl-D-galactosamine + GDP + H(+). It functions in the pathway protein modification; protein glycosylation. In terms of biological role, catalyzes the transfer of L-fucose, from a guanosine diphosphate-beta-L-fucose, to the terminal galactose on both O- and N-linked glycans chains of cell surface glycoproteins and glycolipids and the resulting epitope regulates several processes such as cell-cell interaction including host-microbe interaction, cell surface expression and cell proliferation. Preferentially fucosylates gangliosides GA1 and GM1 in the antrum, cecum and colon and in the female reproductive organs. Fucosylated host glycoproteins or glycolipids mediate interaction with intestinal microbiota influencing its composition. Creates a soluble precursor oligosaccharide FuC-alpha ((1,2)Galbeta-) called the H antigen which is an essential substrate for the final step in the soluble ABO blood group antigen synthesis pathway. This Bos taurus (Bovine) protein is Galactoside alpha-(1,2)-fucosyltransferase 2.